Consider the following 414-residue polypeptide: Putative competence-damage inducible protein (414 aa).

Belongs to the CinA family.

In Moorella thermoacetica (strain ATCC 39073 / JCM 9320), this protein is Putative competence-damage inducible protein.